Here is a 252-residue protein sequence, read N- to C-terminus: 3-dehydroquinate dehydratase (252 aa).

Residues Glu46–Arg48 and Arg82 contribute to the 3-dehydroquinate site. The active-site Proton donor/acceptor is His143. Lys170 functions as the Schiff-base intermediate with substrate in the catalytic mechanism. 3-dehydroquinate-binding residues include Arg212, Ser231, and Gln235.

The protein belongs to the type-I 3-dehydroquinase family. As to quaternary structure, homodimer.

The catalysed reaction is 3-dehydroquinate = 3-dehydroshikimate + H2O. It functions in the pathway metabolic intermediate biosynthesis; chorismate biosynthesis; chorismate from D-erythrose 4-phosphate and phosphoenolpyruvate: step 3/7. Involved in the third step of the chorismate pathway, which leads to the biosynthesis of aromatic amino acids. Catalyzes the cis-dehydration of 3-dehydroquinate (DHQ) and introduces the first double bond of the aromatic ring to yield 3-dehydroshikimate. This Listeria monocytogenes serotype 4b (strain CLIP80459) protein is 3-dehydroquinate dehydratase.